We begin with the raw amino-acid sequence, 85 residues long: Toxin BmKaTx10 (85 aa).

The first 19 residues, 1 to 19, serve as a signal peptide directing secretion; that stretch reads MNYLVMVSFALLLMTGVES. An LCN-type CS-alpha/beta domain is found at 21–83; it reads RDGYIALPHN…VPIRVPGRCH (63 aa). Cystine bridges form between Cys-31–Cys-82, Cys-35–Cys-55, Cys-41–Cys-65, and Cys-45–Cys-67.

It belongs to the long (4 C-C) scorpion toxin superfamily. Sodium channel inhibitor family. Alpha subfamily. As to expression, expressed by the venom gland.

The protein resides in the secreted. Its function is as follows. Alpha toxins bind voltage-independently at site-3 of sodium channels (Nav) and inhibit the inactivation of the activated channels, thereby blocking neuronal transmission. This is Toxin BmKaTx10 from Olivierus martensii (Manchurian scorpion).